Reading from the N-terminus, the 215-residue chain is Small ribosomal subunit protein uS2 (215 aa).

Belongs to the universal ribosomal protein uS2 family.

In Caldivirga maquilingensis (strain ATCC 700844 / DSM 13496 / JCM 10307 / IC-167), this protein is Small ribosomal subunit protein uS2.